The sequence spans 997 residues: Serine-repeat antigen protein 5 (997 aa).

The first 22 residues, 1-22 (MKSYISLFFILCVIFNKNVIKC), serve as a signal peptide directing secretion. Disordered stretches follow at residues 26 to 107 (SQTG…EKQD) and 181 to 252 (LPSN…PRNL). The span at 30–51 (NTGGGQAGNTGGDQAGSTGGSP) shows a compositional bias: gly residues. Over residues 52–67 (QGSTGASPQGSTGASP) the composition is skewed to low complexity. Residues 68-84 (QGSTGASQPGSSEPSNP) show a composition bias toward polar residues. Low complexity-rich tracts occupy residues 85–103 (VSSG…STSS), 183–196 (SNGT…STGT), and 205–235 (SDSS…SSES). Ser-183 is modified (phosphoserine). Asn-184 is a glycosylation site (N-linked (GlcNAc...) asparagine). Residues 216 to 253 (SSSSSSSSSSSSSSSSSSESLPANGPDSPTVKPPRNLQ) form an interaction with PTKL region. N-linked (GlcNAc...) asparagine glycosylation is present at Asn-318. The tract at residues 373 to 390 (YKYLSEDIVSKFKEIKAE) is interaction with host VTN. A disulfide bond links Cys-445 and Cys-497. At Thr-549 the chain carries Phosphothreonine; by CPK1. Disulfide bonds link Cys-567–Cys-572, Cys-581–Cys-610, Cys-593–Cys-636, Cys-627–Cys-672, and Cys-755–Cys-809. The tract at residues 579-997 (NNCISNLQVE…TNNECYFCYV (419 aa)) is thiol-protease-like. Catalysis depends on residues His-762 and Asn-787. N-linked (GlcNAc...) asparagine glycosylation occurs at Asn-828. The propeptide at 843 to 886 (KASPEFYHNLYFKNFNVGKKNLFSEKEDNENNKKLGNNYIIFGQ) is inhibition peptide. A Phosphoserine modification is found at Ser-866.

It belongs to the peptidase C1 family. In terms of assembly, may interact (via C-terminus) with PTKL (via SAM domain). As to quaternary structure, interacts (via C-terminus) with human VTN (via hemopexin repeat 2); may form heterotetramers of two VTN and SERA5 P47 heterodimers; the interaction may protect merozoites from phagocytosis by host monocytes; VTN glycosylation appears to be dispensable for the interaction. Monomer. Interacts with kinase CPK1/CDPK1 at the schizont stage. In terms of processing, phosphorylation by CPK1/CDPK1 increases SERA5 protease activity towards a synthetic peptide in vitro. Just prior to merozoite egress from host erythrocytes, proteolytically cleaved into multiple fragments. Cleaved by SUB1 into p47 and p73, p73 is further cleaved by SUB1 into p56 and p18 and p56 is further processed into p50 by an unidentified protease. p47 remains covalently associated with p18 via disulfide bond. p47 can be processed into p25n and p25c by SUB1. p25c and p25n remain associated with p18. Proteolytic processing is essential for merozoite egress from host erythrocytes. The cleavage of the propeptide to produce p50 is necessary for protease activity and to promote merozoite egress.

Its subcellular location is the parasitophorous vacuole. It localises to the secreted. The protein localises to the cell membrane. Its function is as follows. Plays an essential role during the asexual blood stage development by controlling the kinetics of merozoite egress from host erythrocytes. Specifically, prevents premature rupture of the parasitophorous vacuole and host erythrocyte membranes. Functionally, may prevent merozoite phagocytosis by host monocytes via interaction with host VTN at the merozoite surface. Plays a role in parasite growth. Protease activity is controversial. Has been shown in a number of studies to have protease activity towards a synthetic peptide in vitro. Has also been shown to lack protease activity towards a synthetic peptide in vitro. This is Serine-repeat antigen protein 5 from Plasmodium falciparum (isolate 3D7).